The following is a 189-amino-acid chain: MISTTIFIITSLAAVTYGRSHLTVPVGSTCTLQGPQEGYVTWWRIYDNGGFARPCDQPGTKFSCNGRDLTIINITSNEQGFYYGTNYKNSLDYNIIVVPATTSAPRKSTFSSSSAKASTIPKTASAMLKLPKIALSNSTAAPNTIPKSTIGIITAVVVGLMIIFLCIMYYACCYRKHEQKGDALLNFDI.

Asn-73 and Asn-137 each carry an N-linked (GlcNAc...) asparagine; by host glycan.

This sequence belongs to the adenoviridae E3_20 family.

E3 proteins seem to be dispensable for virus growth in tissue culture cells. They are potentially important for virus growth under special conditions; E3 region may help adenoviruses to evade the immune surveillance of the host. In Human adenovirus B serotype 3 (HAdV-3), this protein is Early E3 20.5 kDa glycoprotein.